The following is a 70-amino-acid chain: Large ribosomal subunit protein bL28 (70 aa).

Positions Met1 to Gly26 are disordered.

The protein belongs to the bacterial ribosomal protein bL28 family.

The protein is Large ribosomal subunit protein bL28 (rpmB) of Thermotoga maritima (strain ATCC 43589 / DSM 3109 / JCM 10099 / NBRC 100826 / MSB8).